A 181-amino-acid chain; its full sequence is TATA-box-binding protein (181 aa).

A run of 2 repeats spans residues 7–83 (VVNV…VKEL) and 98–173 (VQNM…SKTL).

Belongs to the TBP family.

General factor that plays a role in the activation of archaeal genes transcribed by RNA polymerase. Binds specifically to the TATA box promoter element which lies close to the position of transcription initiation. In Methanococcus maripaludis (strain DSM 14266 / JCM 13030 / NBRC 101832 / S2 / LL), this protein is TATA-box-binding protein.